The primary structure comprises 282 residues: 3-methyl-2-oxobutanoate hydroxymethyltransferase (282 aa).

Mg(2+)-binding residues include aspartate 63 and aspartate 102. 3-methyl-2-oxobutanoate is bound by residues 63 to 64 (DS), aspartate 102, and lysine 132. Glutamate 134 serves as a coordination point for Mg(2+). Glutamate 200 (proton acceptor) is an active-site residue.

The protein belongs to the PanB family. In terms of assembly, homodecamer; pentamer of dimers. The cofactor is Mg(2+).

It is found in the cytoplasm. The enzyme catalyses 3-methyl-2-oxobutanoate + (6R)-5,10-methylene-5,6,7,8-tetrahydrofolate + H2O = 2-dehydropantoate + (6S)-5,6,7,8-tetrahydrofolate. The protein operates within cofactor biosynthesis; (R)-pantothenate biosynthesis; (R)-pantoate from 3-methyl-2-oxobutanoate: step 1/2. Functionally, catalyzes the reversible reaction in which hydroxymethyl group from 5,10-methylenetetrahydrofolate is transferred onto alpha-ketoisovalerate to form ketopantoate. This Mycobacterium sp. (strain JLS) protein is 3-methyl-2-oxobutanoate hydroxymethyltransferase.